A 339-amino-acid chain; its full sequence is Undecaprenyl-phosphate 4-deoxy-4-formamido-L-arabinose transferase (339 aa).

The next 2 helical transmembrane spans lie at 235-255 and 270-290; these read LSII…MLIV and FVLF…MGLL.

This sequence belongs to the glycosyltransferase 2 family.

The protein localises to the cell inner membrane. It catalyses the reaction UDP-4-deoxy-4-formamido-beta-L-arabinose + di-trans,octa-cis-undecaprenyl phosphate = 4-deoxy-4-formamido-alpha-L-arabinopyranosyl di-trans,octa-cis-undecaprenyl phosphate + UDP. It participates in glycolipid biosynthesis; 4-amino-4-deoxy-alpha-L-arabinose undecaprenyl phosphate biosynthesis; 4-amino-4-deoxy-alpha-L-arabinose undecaprenyl phosphate from UDP-4-deoxy-4-formamido-beta-L-arabinose and undecaprenyl phosphate: step 1/2. The protein operates within bacterial outer membrane biogenesis; lipopolysaccharide biosynthesis. Catalyzes the transfer of 4-deoxy-4-formamido-L-arabinose from UDP to undecaprenyl phosphate. The modified arabinose is attached to lipid A and is required for resistance to polymyxin and cationic antimicrobial peptides. This chain is Undecaprenyl-phosphate 4-deoxy-4-formamido-L-arabinose transferase, found in Pseudomonas fluorescens (strain ATCC BAA-477 / NRRL B-23932 / Pf-5).